The primary structure comprises 987 residues: VPS35 endosomal protein sorting factor-like (987 aa).

A compositionally biased stretch (low complexity) spans 1 to 23 (MAERQSASSPTPSSPPQQQQQTP). Residues 1–115 (MAERQSASSP…DPLNNPLEKK (115 aa)) are disordered. A compositionally biased stretch (basic and acidic residues) spans 43–63 (NGREVERHPLNSITKTEDTGK). Residues 66-111 (QSSLSSNASSLQSAAAAASSSTATTDIDPLNNNNNNNTDIDPLNNP) show a composition bias toward low complexity.

Belongs to the VPS35L family. As to quaternary structure, component of the heterotrimeric retriever complex.

Its subcellular location is the endosome. Its function is as follows. Acts as a component of the retriever complex. The retriever complex is a heterotrimeric complex related to retromer cargo-selective complex (CSC) and essential for retromer-independent retrieval and recycling of numerous cargos. This Dictyostelium discoideum (Social amoeba) protein is VPS35 endosomal protein sorting factor-like.